A 257-amino-acid polypeptide reads, in one-letter code: Pyridoxine 5'-phosphate synthase (257 aa).

Asn-12 is a 3-amino-2-oxopropyl phosphate binding site. Asp-14–His-15 serves as a coordination point for 1-deoxy-D-xylulose 5-phosphate. Arg-23 is a binding site for 3-amino-2-oxopropyl phosphate. Residue His-48 is the Proton acceptor of the active site. Residues Arg-50 and His-55 each coordinate 1-deoxy-D-xylulose 5-phosphate. The Proton acceptor role is filled by Glu-75. 1-deoxy-D-xylulose 5-phosphate is bound at residue Thr-105. Catalysis depends on His-199, which acts as the Proton donor. 3-amino-2-oxopropyl phosphate is bound by residues Gly-200 and Gly-221–His-222.

It belongs to the PNP synthase family. In terms of assembly, homooctamer; tetramer of dimers.

The protein resides in the cytoplasm. It carries out the reaction 3-amino-2-oxopropyl phosphate + 1-deoxy-D-xylulose 5-phosphate = pyridoxine 5'-phosphate + phosphate + 2 H2O + H(+). It functions in the pathway cofactor biosynthesis; pyridoxine 5'-phosphate biosynthesis; pyridoxine 5'-phosphate from D-erythrose 4-phosphate: step 5/5. In terms of biological role, catalyzes the complicated ring closure reaction between the two acyclic compounds 1-deoxy-D-xylulose-5-phosphate (DXP) and 3-amino-2-oxopropyl phosphate (1-amino-acetone-3-phosphate or AAP) to form pyridoxine 5'-phosphate (PNP) and inorganic phosphate. The protein is Pyridoxine 5'-phosphate synthase of Xanthobacter autotrophicus (strain ATCC BAA-1158 / Py2).